The primary structure comprises 131 residues: Small ribosomal subunit protein uS8 (131 aa).

It belongs to the universal ribosomal protein uS8 family. As to quaternary structure, part of the 30S ribosomal subunit. Contacts proteins S5 and S12.

Its function is as follows. One of the primary rRNA binding proteins, it binds directly to 16S rRNA central domain where it helps coordinate assembly of the platform of the 30S subunit. The polypeptide is Small ribosomal subunit protein uS8 (Variovorax paradoxus (strain S110)).